The following is a 352-amino-acid chain: tRNA N6-adenosine threonylcarbamoyltransferase (352 aa).

The Fe cation site is built by H111 and H115. Substrate-binding positions include 133–137, D166, G179, and N275; that span reads LASGG. D300 lines the Fe cation pocket.

It belongs to the KAE1 / TsaD family. The cofactor is Fe(2+).

The protein resides in the cytoplasm. It carries out the reaction L-threonylcarbamoyladenylate + adenosine(37) in tRNA = N(6)-L-threonylcarbamoyladenosine(37) in tRNA + AMP + H(+). Required for the formation of a threonylcarbamoyl group on adenosine at position 37 (t(6)A37) in tRNAs that read codons beginning with adenine. Is involved in the transfer of the threonylcarbamoyl moiety of threonylcarbamoyl-AMP (TC-AMP) to the N6 group of A37, together with TsaE and TsaB. TsaD likely plays a direct catalytic role in this reaction. The chain is tRNA N6-adenosine threonylcarbamoyltransferase from Treponema pallidum (strain Nichols).